Reading from the N-terminus, the 440-residue chain is Thymidine phosphorylase (440 aa).

Belongs to the thymidine/pyrimidine-nucleoside phosphorylase family. In terms of assembly, homodimer.

It catalyses the reaction thymidine + phosphate = 2-deoxy-alpha-D-ribose 1-phosphate + thymine. The protein operates within pyrimidine metabolism; dTMP biosynthesis via salvage pathway; dTMP from thymine: step 1/2. Its function is as follows. The enzymes which catalyze the reversible phosphorolysis of pyrimidine nucleosides are involved in the degradation of these compounds and in their utilization as carbon and energy sources, or in the rescue of pyrimidine bases for nucleotide synthesis. The protein is Thymidine phosphorylase of Burkholderia pseudomallei (strain 1106a).